Here is a 450-residue protein sequence, read N- to C-terminus: Enolase (450 aa).

Glutamine 167 provides a ligand contact to (2R)-2-phosphoglycerate. The active-site Proton donor is glutamate 209. The Mg(2+) site is built by aspartate 250, glutamate 307, and aspartate 334. (2R)-2-phosphoglycerate is bound by residues lysine 359, arginine 388, serine 389, and lysine 410. Lysine 359 acts as the Proton acceptor in catalysis.

The protein belongs to the enolase family. It depends on Mg(2+) as a cofactor.

It localises to the cytoplasm. Its subcellular location is the secreted. The protein localises to the cell surface. The enzyme catalyses (2R)-2-phosphoglycerate = phosphoenolpyruvate + H2O. Its pathway is carbohydrate degradation; glycolysis; pyruvate from D-glyceraldehyde 3-phosphate: step 4/5. Its function is as follows. Catalyzes the reversible conversion of 2-phosphoglycerate (2-PG) into phosphoenolpyruvate (PEP). It is essential for the degradation of carbohydrates via glycolysis. In terms of biological role, 'Moonlights' as a plasminogen receptor and plasmin activator. Contributes to host (pig) cell adhesion; anti-enolase antibodies decrease binding to porcine kidney cells about 60%. Binds host plasminogen and fibronectin in vitro; enhances the activity of host tissue-specific plasminogen activator (tPA), and helps plasminogen and tPA degrade articifial host extracellular matrices. This is Enolase from Mesomycoplasma hyorhinis (strain HUB-1) (Mycoplasma hyorhinis).